The following is an 85-amino-acid chain: U4-theraphotoxin-Hhn1a (85 aa).

Positions 1–22 are cleaved as a signal peptide; sequence MKMTLIAILTCAAVLVLHTTAA. Positions 23-48 are excised as a propeptide; it reads EELEAESQLMEVGMPDTELAAVDEER. 3 cysteine pairs are disulfide-bonded: Cys-52–Cys-66, Cys-56–Cys-77, and Cys-71–Cys-82.

Belongs to the neurotoxin 12 (Hwtx-2) family. 02 (Hwtx-2) subfamily. In terms of assembly, monomer. As to expression, expressed by the venom gland.

Its subcellular location is the secreted. Its function is as follows. Neurotoxin active on both insects and mammals. This Cyriopagopus hainanus (Chinese bird spider) protein is U4-theraphotoxin-Hhn1a.